Here is a 213-residue protein sequence, read N- to C-terminus: Orotidine 5'-phosphate decarboxylase (213 aa).

Substrate is bound by residues D11, K33, 61-70 (DLKLADIPNT), S113, 166-176 (PGVGAQGGKAS), G189, and R190. Residue K63 is the Proton donor of the active site.

The protein belongs to the OMP decarboxylase family. Type 1 subfamily. As to quaternary structure, homodimer.

It carries out the reaction orotidine 5'-phosphate + H(+) = UMP + CO2. Its pathway is pyrimidine metabolism; UMP biosynthesis via de novo pathway; UMP from orotate: step 2/2. Functionally, catalyzes the decarboxylation of orotidine 5'-monophosphate (OMP) to uridine 5'-monophosphate (UMP). In Thermococcus kodakarensis (strain ATCC BAA-918 / JCM 12380 / KOD1) (Pyrococcus kodakaraensis (strain KOD1)), this protein is Orotidine 5'-phosphate decarboxylase.